A 327-amino-acid chain; its full sequence is Glycerol-3-phosphate dehydrogenase [NAD(P)+] (327 aa).

NADPH contacts are provided by serine 10, phenylalanine 11, arginine 31, and lysine 108. Sn-glycerol 3-phosphate-binding residues include lysine 108, glycine 136, and serine 138. Alanine 140 provides a ligand contact to NADPH. Residues lysine 191, aspartate 246, serine 256, arginine 257, and asparagine 258 each coordinate sn-glycerol 3-phosphate. The active-site Proton acceptor is lysine 191. Arginine 257 lines the NADPH pocket. Positions 281 and 283 each coordinate NADPH.

Belongs to the NAD-dependent glycerol-3-phosphate dehydrogenase family.

The protein resides in the cytoplasm. The enzyme catalyses sn-glycerol 3-phosphate + NAD(+) = dihydroxyacetone phosphate + NADH + H(+). It carries out the reaction sn-glycerol 3-phosphate + NADP(+) = dihydroxyacetone phosphate + NADPH + H(+). Its pathway is membrane lipid metabolism; glycerophospholipid metabolism. Catalyzes the reduction of the glycolytic intermediate dihydroxyacetone phosphate (DHAP) to sn-glycerol 3-phosphate (G3P), the key precursor for phospholipid synthesis. The protein is Glycerol-3-phosphate dehydrogenase [NAD(P)+] of Ehrlichia ruminantium (strain Welgevonden).